We begin with the raw amino-acid sequence, 331 residues long: UDP-glucose 4-epimerase (331 aa).

NAD(+)-binding positions include 11–12 (YI), 31–36 (DNLITG), 51–52 (DI), 73–77 (FAAFS), asparagine 92, threonine 117, tyrosine 141, lysine 145, and phenylalanine 169. Substrate is bound by residues threonine 117 and tyrosine 141. Tyrosine 141 serves as the catalytic Proton acceptor. Substrate is bound by residues asparagine 170, 189–190 (HI), 206–208 (QIY), arginine 221, and 282–285 (RAGD).

It belongs to the NAD(P)-dependent epimerase/dehydratase family. As to quaternary structure, homodimer. Requires NAD(+) as cofactor.

It catalyses the reaction UDP-alpha-D-glucose = UDP-alpha-D-galactose. Its pathway is carbohydrate metabolism; galactose metabolism. The protein is UDP-glucose 4-epimerase (galE) of Lacticaseibacillus casei (Lactobacillus casei).